The following is a 104-amino-acid chain: Pterin-4-alpha-carbinolamine dehydratase (104 aa).

A2 carries the post-translational modification N-acetylalanine. Substrate is bound by residues 61-63 (DHH) and 78-81 (STHE).

Belongs to the pterin-4-alpha-carbinolamine dehydratase family. As to quaternary structure, homotetramer and homodimer. Heterotetramer with HNF1A; formed by a dimer of dimers. Interacts with HNF1B (via HNF-p1 domain); the interaction increases HNF1B transactivation activity. As to expression, mainly expressed in the liver, in pancreatic cells, and in the kidney, especially in the distal convoluted tubule, in the cortical thick ascending limb of Henle's loop and in the connecting tubule.

The protein localises to the cytoplasm. The protein resides in the nucleus. It catalyses the reaction (4aS,6R)-4a-hydroxy-L-erythro-5,6,7,8-tetrahydrobiopterin = (6R)-L-erythro-6,7-dihydrobiopterin + H2O. In terms of biological role, involved in tetrahydrobiopterin biosynthesis. Seems to both prevent the formation of 7-pterins and accelerate the formation of quinonoid-BH2. Coactivator for HNF1A-dependent transcription. Regulates the dimerization of homeodomain protein HNF1A and enhances its transcriptional activity. Also acts as a coactivator for HNF1B-dependent transcription. This Mus musculus (Mouse) protein is Pterin-4-alpha-carbinolamine dehydratase (Pcbd1).